The chain runs to 65 residues: uncharacterized protein (65 aa).

This is an uncharacterized protein from Invertebrate iridescent virus 6 (IIV-6).